The primary structure comprises 87 residues: Costars family protein (87 aa).

This sequence belongs to the costars family.

In Oryza sativa subsp. indica (Rice), this protein is Costars family protein.